A 459-amino-acid polypeptide reads, in one-letter code: Exodeoxyribonuclease 7 large subunit (459 aa).

It belongs to the XseA family. As to quaternary structure, heterooligomer composed of large and small subunits.

The protein resides in the cytoplasm. It catalyses the reaction Exonucleolytic cleavage in either 5'- to 3'- or 3'- to 5'-direction to yield nucleoside 5'-phosphates.. Bidirectionally degrades single-stranded DNA into large acid-insoluble oligonucleotides, which are then degraded further into small acid-soluble oligonucleotides. The sequence is that of Exodeoxyribonuclease 7 large subunit from Pseudomonas fluorescens (strain ATCC BAA-477 / NRRL B-23932 / Pf-5).